The following is a 481-amino-acid chain: UDP-N-acetylmuramoyl-L-alanyl-D-glutamate--L-lysine ligase (481 aa).

Serine 42 contributes to the UDP-N-acetyl-alpha-D-muramoyl-L-alanyl-D-glutamate binding site. Residue 118–124 (GTKGKTT) participates in ATP binding. UDP-N-acetyl-alpha-D-muramoyl-L-alanyl-D-glutamate-binding positions include 160–161 (TT), serine 187, and arginine 195. The residue at position 229 (lysine 229) is an N6-carboxylysine. The short motif at 404 to 407 (DDPN) is the L-lysine recognition motif element.

It belongs to the MurCDEF family. MurE subfamily. In terms of processing, carboxylation is probably crucial for Mg(2+) binding and, consequently, for the gamma-phosphate positioning of ATP.

It is found in the cytoplasm. It catalyses the reaction UDP-N-acetyl-alpha-D-muramoyl-L-alanyl-D-glutamate + L-lysine + ATP = UDP-N-acetyl-alpha-D-muramoyl-L-alanyl-gamma-D-glutamyl-L-lysine + ADP + phosphate + H(+). It participates in cell wall biogenesis; peptidoglycan biosynthesis. Its function is as follows. Catalyzes the addition of L-lysine to the nucleotide precursor UDP-N-acetylmuramoyl-L-alanyl-D-glutamate (UMAG) in the biosynthesis of bacterial cell-wall peptidoglycan. The chain is UDP-N-acetylmuramoyl-L-alanyl-D-glutamate--L-lysine ligase from Streptococcus suis (strain 98HAH33).